The following is a 141-amino-acid chain: Small ribosomal subunit protein bS16 (141 aa).

Composition is skewed to polar residues over residues 89 to 101 and 109 to 129; these read NVSV…TEAI and ATAN…TATI. The tract at residues 89 to 141 is disordered; it reads NVSVSHAESTEAITNAEPIQATANTESNEVSDSESTATATIRESEEQPPISES.

Belongs to the bacterial ribosomal protein bS16 family.

The sequence is that of Small ribosomal subunit protein bS16 from Trichodesmium erythraeum (strain IMS101).